We begin with the raw amino-acid sequence, 50 residues long: uncharacterized protein (50 aa).

This is an uncharacterized protein from Bacillus subtilis (Bacteriophage phi-105).